The following is a 466-amino-acid chain: 3-isopropylmalate dehydratase large subunit (466 aa).

Cysteine 347, cysteine 407, and cysteine 410 together coordinate [4Fe-4S] cluster.

Belongs to the aconitase/IPM isomerase family. LeuC type 1 subfamily. In terms of assembly, heterodimer of LeuC and LeuD. It depends on [4Fe-4S] cluster as a cofactor.

It carries out the reaction (2R,3S)-3-isopropylmalate = (2S)-2-isopropylmalate. Its pathway is amino-acid biosynthesis; L-leucine biosynthesis; L-leucine from 3-methyl-2-oxobutanoate: step 2/4. Catalyzes the isomerization between 2-isopropylmalate and 3-isopropylmalate, via the formation of 2-isopropylmaleate. In Shewanella halifaxensis (strain HAW-EB4), this protein is 3-isopropylmalate dehydratase large subunit.